Consider the following 354-residue polypeptide: Uroporphyrinogen decarboxylase (354 aa).

Residues 27-31 (RQAGR), Phe-46, Asp-77, Tyr-154, Thr-209, and His-327 contribute to the substrate site.

Belongs to the uroporphyrinogen decarboxylase family. Homodimer.

It localises to the cytoplasm. The catalysed reaction is uroporphyrinogen III + 4 H(+) = coproporphyrinogen III + 4 CO2. It functions in the pathway porphyrin-containing compound metabolism; protoporphyrin-IX biosynthesis; coproporphyrinogen-III from 5-aminolevulinate: step 4/4. In terms of biological role, catalyzes the decarboxylation of four acetate groups of uroporphyrinogen-III to yield coproporphyrinogen-III. This is Uroporphyrinogen decarboxylase from Pseudomonas putida (strain ATCC 47054 / DSM 6125 / CFBP 8728 / NCIMB 11950 / KT2440).